The chain runs to 152 residues: SsrA-binding protein (152 aa).

Positions 129–140 (KREDMKKKDSQR) are enriched in basic and acidic residues. The disordered stretch occupies residues 129–152 (KREDMKKKDSQRELSQALKSKNRE). A compositionally biased stretch (polar residues) spans 141 to 152 (ELSQALKSKNRE).

This sequence belongs to the SmpB family.

Its subcellular location is the cytoplasm. In terms of biological role, required for rescue of stalled ribosomes mediated by trans-translation. Binds to transfer-messenger RNA (tmRNA), required for stable association of tmRNA with ribosomes. tmRNA and SmpB together mimic tRNA shape, replacing the anticodon stem-loop with SmpB. tmRNA is encoded by the ssrA gene; the 2 termini fold to resemble tRNA(Ala) and it encodes a 'tag peptide', a short internal open reading frame. During trans-translation Ala-aminoacylated tmRNA acts like a tRNA, entering the A-site of stalled ribosomes, displacing the stalled mRNA. The ribosome then switches to translate the ORF on the tmRNA; the nascent peptide is terminated with the 'tag peptide' encoded by the tmRNA and targeted for degradation. The ribosome is freed to recommence translation, which seems to be the essential function of trans-translation. This is SsrA-binding protein from Pelobacter propionicus (strain DSM 2379 / NBRC 103807 / OttBd1).